A 794-amino-acid polypeptide reads, in one-letter code: Lon protease (794 aa).

Positions 29 to 222 constitute a Lon N-terminal domain; sequence VPLLPLRGVL…TLISIIQDEQ (194 aa). 374 to 381 serves as a coordination point for ATP; that stretch reads GPPGVGKT. The Lon proteolytic domain occupies 610–791; it reads TDQVGMATGL…DEVLEHALVG (182 aa). Catalysis depends on residues Ser-697 and Lys-740.

Belongs to the peptidase S16 family. Homohexamer. Organized in a ring with a central cavity.

Its subcellular location is the cytoplasm. It catalyses the reaction Hydrolysis of proteins in presence of ATP.. Its function is as follows. ATP-dependent serine protease that mediates the selective degradation of mutant and abnormal proteins as well as certain short-lived regulatory proteins. Required for cellular homeostasis and for survival from DNA damage and developmental changes induced by stress. Degrades polypeptides processively to yield small peptide fragments that are 5 to 10 amino acids long. Binds to DNA in a double-stranded, site-specific manner. The chain is Lon protease from Bacillus thuringiensis (strain Al Hakam).